Reading from the N-terminus, the 467-residue chain is 3-isopropylmalate dehydratase large subunit (467 aa).

3 residues coordinate [4Fe-4S] cluster: cysteine 348, cysteine 409, and cysteine 412. The interval 423 to 448 (NERSISTSNRNFEGRQGKGSRTHLAS) is disordered.

Belongs to the aconitase/IPM isomerase family. LeuC type 1 subfamily. Heterodimer of LeuC and LeuD. It depends on [4Fe-4S] cluster as a cofactor.

The catalysed reaction is (2R,3S)-3-isopropylmalate = (2S)-2-isopropylmalate. It functions in the pathway amino-acid biosynthesis; L-leucine biosynthesis; L-leucine from 3-methyl-2-oxobutanoate: step 2/4. Catalyzes the isomerization between 2-isopropylmalate and 3-isopropylmalate, via the formation of 2-isopropylmaleate. The protein is 3-isopropylmalate dehydratase large subunit of Bifidobacterium longum (strain DJO10A).